A 96-amino-acid chain; its full sequence is SPbeta prophage-derived uncharacterized protein YosV (96 aa).

The sequence is that of SPbeta prophage-derived uncharacterized protein YosV (yosV) from Bacillus subtilis (strain 168).